The primary structure comprises 86 residues: Cerebrin prohormone (86 aa).

The first 27 residues, 1 to 27 (MFGYRSLLVLLVTLSLCLLLQSSHCSA), serve as a signal peptide directing secretion. A propeptide spanning residues 28-64 (VRTYGNDLDARARREIISLAARLIKLSMYGPEDDSFV) is cleaved from the precursor. Position 83 is an isoleucine amide (I83).

Expressed only in cerebral ganglion.

The protein localises to the secreted. Functionally, may function as a hormone and may play a neuromodulatory role. This is Cerebrin prohormone (CBPH) from Aplysia californica (California sea hare).